The primary structure comprises 200 residues: NAD(P)H dehydrogenase (quinone) (200 aa).

The Flavodoxin-like domain occupies 4–191 (LLVLYYSMYG…TIARFQGEHV (188 aa)). FMN is bound by residues 10 to 15 (SMYGHV) and 79 to 81 (TRF). Tyr-12 serves as a coordination point for NAD(+). Trp-99 contributes to the substrate binding site. FMN is bound by residues 114–120 (STASQHG) and His-135.

It belongs to the WrbA family. Requires FMN as cofactor.

It catalyses the reaction a quinone + NADH + H(+) = a quinol + NAD(+). The enzyme catalyses a quinone + NADPH + H(+) = a quinol + NADP(+). The polypeptide is NAD(P)H dehydrogenase (quinone) (Nitrosococcus oceani (strain ATCC 19707 / BCRC 17464 / JCM 30415 / NCIMB 11848 / C-107)).